The following is a 481-amino-acid chain: Glutamyl-tRNA(Gln) amidotransferase subunit A (481 aa).

Active-site charge relay system residues include lysine 76 and serine 151. The active-site Acyl-ester intermediate is serine 175.

This sequence belongs to the amidase family. GatA subfamily. In terms of assembly, heterotrimer of A, B and C subunits.

The catalysed reaction is L-glutamyl-tRNA(Gln) + L-glutamine + ATP + H2O = L-glutaminyl-tRNA(Gln) + L-glutamate + ADP + phosphate + H(+). In terms of biological role, allows the formation of correctly charged Gln-tRNA(Gln) through the transamidation of misacylated Glu-tRNA(Gln) in organisms which lack glutaminyl-tRNA synthetase. The reaction takes place in the presence of glutamine and ATP through an activated gamma-phospho-Glu-tRNA(Gln). In Neisseria meningitidis serogroup A / serotype 4A (strain DSM 15465 / Z2491), this protein is Glutamyl-tRNA(Gln) amidotransferase subunit A.